The primary structure comprises 836 residues: V-type proton ATPase subunit C (836 aa).

Residues 116–144 (LSLRHQRKHQHTHHQNKPQHYHHHHHHHQ) show a composition bias toward basic residues. 4 disordered regions span residues 116-169 (LSLR…ASAP), 302-403 (APTT…SVQS), 415-453 (KPKR…QNHN), and 496-544 (PSQL…PLSP). Residues 160–169 (ATPPAPASAP) show a composition bias toward pro residues. Residues 302 to 316 (APTTSSSVHSSMSRS) are compositionally biased toward low complexity. Polar residues-rich tracts occupy residues 319-348 (KRLN…HLAT) and 364-374 (TNPLQSPVQKS). Positions 425–450 (AQQQHETAQLQHQQTTQQHATPLTPQ) are enriched in low complexity. Residues 496–511 (PSQLNINNGFNLTPTH) show a composition bias toward polar residues. A compositionally biased stretch (low complexity) spans 512 to 529 (RSSPVSSCCGSSSQGRSS).

Belongs to the V-ATPase C subunit family. V-ATPase is a heteromultimeric enzyme made up of two complexes: the ATP-hydrolytic V1 complex and the proton translocation V0 complex. The V1 complex consists of three catalytic AB heterodimers that form a heterohexamer, three peripheral stalks each consisting of EG heterodimers, one central rotor including subunits D and F, and the regulatory subunits C and H. The proton translocation complex V0 consists of the proton transport subunit a, a ring of proteolipid subunits c9c'', rotary subunit d, subunits e and f, and the accessory subunits VhaAC45 and ATP6AP2. As to expression, in larvae, expressed in the ring gland, CNS, imaginal disks and lymph gland.

Functionally, subunit of the V1 complex of vacuolar(H+)-ATPase (V-ATPase), a multisubunit enzyme composed of a peripheral complex (V1) that hydrolyzes ATP and a membrane integral complex (V0) that translocates protons. V-ATPase is responsible for acidifying and maintaining the pH of intracellular compartments and in some cell types, is targeted to the plasma membrane, where it is responsible for acidifying the extracellular environment. Subunit C is necessary for the assembly of the catalytic sector of the enzyme and is likely to have a specific function in its catalytic activity. In enterocytes, acts as part of a pHCl-2 sensory pathway which mediates Tor-dependent larval growth and metabolism in response to zinc availability. Likely acts in maintaining enterocyte lysosomal acidification which consequently promotes Tor activation at the lysosome membrane. This chain is V-type proton ATPase subunit C (Vha44), found in Drosophila melanogaster (Fruit fly).